Reading from the N-terminus, the 291-residue chain is MSNSYLAFPNIDPVIFSIGPIALHWYGFMYLVGFVFAMWLATRRAAKPNSGWTKNEVENLLYAGFAGVFVGGRLGYVLFYNFPAFLDNPLYLFKVWDGGMSFHGGLVGVICAMWWFGRRTKRHFLQVADFIAPLVPFGLGMGRIGNFINGELWGRVTLDTPWAMLFPSSRGEDIALAATDPSLLSVLEQYGVLPRHPSQLYEMALEGIVLFIILNLYIRKPRPMGSVSGLFLIGYGIFRVIVEFFRQPDAQLGLFDGISMGQILSIPMILAGILMMIWAYKHQGNKVQEVK.

7 consecutive transmembrane segments (helical) span residues 21–41, 60–80, 96–116, 124–144, 198–218, 225–245, and 258–278; these read IALH…MWLA, LLYA…VLFY, WDGG…MWWF, FLQV…MGRI, SQLY…NLYI, GSVS…VEFF, and ISMG…MMIW. Residue Arg143 coordinates a 1,2-diacyl-sn-glycero-3-phospho-(1'-sn-glycerol).

This sequence belongs to the Lgt family.

The protein localises to the cell inner membrane. It carries out the reaction L-cysteinyl-[prolipoprotein] + a 1,2-diacyl-sn-glycero-3-phospho-(1'-sn-glycerol) = an S-1,2-diacyl-sn-glyceryl-L-cysteinyl-[prolipoprotein] + sn-glycerol 1-phosphate + H(+). Its pathway is protein modification; lipoprotein biosynthesis (diacylglyceryl transfer). Its function is as follows. Catalyzes the transfer of the diacylglyceryl group from phosphatidylglycerol to the sulfhydryl group of the N-terminal cysteine of a prolipoprotein, the first step in the formation of mature lipoproteins. The protein is Phosphatidylglycerol--prolipoprotein diacylglyceryl transferase of Photorhabdus laumondii subsp. laumondii (strain DSM 15139 / CIP 105565 / TT01) (Photorhabdus luminescens subsp. laumondii).